Reading from the N-terminus, the 329-residue chain is Peroxidase 58 (329 aa).

The N-terminal stretch at 1-23 is a signal peptide; that stretch reads MGLSKTIPLVLLPILMFGVLSNA. 4 cysteine pairs are disulfide-bonded: Cys34/Cys116, Cys67/Cys72, Cys122/Cys325, and Cys201/Cys234. A glycan (N-linked (GlcNAc...) asparagine) is linked at Asn36. The active-site Proton acceptor is the His65. 5 residues coordinate Ca(2+): Asp66, Val69, Gly71, Asp73, and Ser75. Pro164 lines the substrate pocket. Heme b is bound at residue His194. Thr195 serves as a coordination point for Ca(2+). An N-linked (GlcNAc...) asparagine glycan is attached at Asn210. Residues Asp247, Ser250, and Asp255 each contribute to the Ca(2+) site.

Belongs to the peroxidase family. Classical plant (class III) peroxidase subfamily. It depends on heme b as a cofactor. The cofactor is Ca(2+).

The protein resides in the secreted. The enzyme catalyses 2 a phenolic donor + H2O2 = 2 a phenolic radical donor + 2 H2O. In terms of biological role, removal of H(2)O(2), oxidation of toxic reductants, biosynthesis and degradation of lignin, suberization, auxin catabolism, response to environmental stresses such as wounding, pathogen attack and oxidative stress. These functions might be dependent on each isozyme/isoform in each plant tissue. In Arabidopsis thaliana (Mouse-ear cress), this protein is Peroxidase 58 (PER58).